A 345-amino-acid chain; its full sequence is S-adenosylmethionine:tRNA ribosyltransferase-isomerase (345 aa).

Belongs to the QueA family. As to quaternary structure, monomer.

The protein localises to the cytoplasm. The catalysed reaction is 7-aminomethyl-7-carbaguanosine(34) in tRNA + S-adenosyl-L-methionine = epoxyqueuosine(34) in tRNA + adenine + L-methionine + 2 H(+). It functions in the pathway tRNA modification; tRNA-queuosine biosynthesis. Its function is as follows. Transfers and isomerizes the ribose moiety from AdoMet to the 7-aminomethyl group of 7-deazaguanine (preQ1-tRNA) to give epoxyqueuosine (oQ-tRNA). This is S-adenosylmethionine:tRNA ribosyltransferase-isomerase from Thermodesulfovibrio yellowstonii (strain ATCC 51303 / DSM 11347 / YP87).